The sequence spans 490 residues: Cobyric acid synthase (490 aa).

Residues 252 to 439 (RLKVVVPVLP…LHGLFESTAA (188 aa)) enclose the GATase cobBQ-type domain. The Nucleophile role is filled by cysteine 333. Histidine 431 is an active-site residue.

Belongs to the CobB/CobQ family. CobQ subfamily.

It functions in the pathway cofactor biosynthesis; adenosylcobalamin biosynthesis. Catalyzes amidations at positions B, D, E, and G on adenosylcobyrinic A,C-diamide. NH(2) groups are provided by glutamine, and one molecule of ATP is hydrogenolyzed for each amidation. This is Cobyric acid synthase from Pseudomonas aeruginosa (strain UCBPP-PA14).